The primary structure comprises 494 residues: Flagellin A (494 aa).

This sequence belongs to the bacterial flagellin family. In terms of assembly, heteromer of FlaA and FlaB. FlaB is located proximal to the hook while the remainder of the filament is composed of the predominant FlaA.

The protein resides in the secreted. The protein localises to the bacterial flagellum. In terms of biological role, flagellin is the subunit protein which polymerizes to form the filaments of bacterial flagella. Important for motility and virulence. The protein is Flagellin A (flaA) of Helicobacter mustelae.